Reading from the N-terminus, the 493-residue chain is Occludin (493 aa).

At 1-47 the chain is on the cytoplasmic side; it reads MYSRPSNYAPSKDVYGGEMRSQPAYSYYPEEEIQHFYRWSSPPGIIK. The region spanning 41-250 is the MARVEL domain; sequence SPPGIIKIMS…IIFFAVKTRK (210 aa). A helical membrane pass occupies residues 48 to 70; it reads IMSILIVVMCVGIFACVASTLPW. Topologically, residues 71 to 116 are extracellular; it reads DLDITGQSMGYGMGSGSYSGGYTGYGFGGSQMGLGFAYGGNYTDPR. The helical transmembrane segment at 117-141 threads the bilayer; it reads AAKGFILAMAAFCFIIGLVIFVMLV. Residues 142-151 lie on the Cytoplasmic side of the membrane; that stretch reads TRTPLSTSRK. The helical transmembrane segment at 152–176 threads the bilayer; that stretch reads FYLIVIIVSAIIGGLVFIATIVYTV. Residues 177-224 lie on the Extracellular side of the membrane; that stretch reads GVNPVAQASGSAFYTQIVSICNQFYSPVQTGVFVNQYLYHYCVVEPQE. Cysteine 197 and cysteine 218 are oxidised to a cystine. The chain crosses the membrane as a helical span at residues 225 to 246; the sequence is AIAIVLGFLIVVAFAIIIFFAV. The Cytoplasmic segment spans residues 247–493; sequence KTRKKINQYG…IKQMVSNYDK (247 aa). A disordered region spans residues 334-407; it reads YGMSPRHYSS…TKQRQEYKQE (74 aa). The segment covering 352–361 has biased composition (basic residues); it reads APPKKRPGKP. Phosphothreonine; by CK2; in vitro is present on threonine 375. Position 379 is a phosphoserine; by CK2; in vitro (serine 379). Positions 379 to 389 are enriched in acidic residues; sequence SADELEDDSWD. Residues 386-493 form the OCEL domain; it reads DSWDSEYPPI…IKQMVSNYDK (108 aa). Positions 396-428 form a coiled coil; it reads TQTKQRQEYKQEFASDLHEYKRLQAELDELSKI.

The protein belongs to the ELL/occludin family. In terms of assembly, interacts in vitro with cingulin, possibly directly. Interacts with ZO-1. Phosphorylated. As to expression, localized at tight junctions of both epithelial and endothelial cells.

The protein localises to the cell membrane. Its subcellular location is the cell junction. The protein resides in the tight junction. Its function is as follows. Probably plays a role in the formation and regulation of the tight junction (TJ) paracellular permeability barrier. The protein is Occludin (ocln) of Xenopus laevis (African clawed frog).